A 459-amino-acid chain; its full sequence is Argininosuccinate lyase (459 aa).

It belongs to the lyase 1 family. Argininosuccinate lyase subfamily.

It localises to the cytoplasm. It catalyses the reaction 2-(N(omega)-L-arginino)succinate = fumarate + L-arginine. The protein operates within amino-acid biosynthesis; L-arginine biosynthesis; L-arginine from L-ornithine and carbamoyl phosphate: step 3/3. The protein is Argininosuccinate lyase of Staphylococcus aureus (strain USA300).